The following is a 354-amino-acid chain: Lysophosphatidic acid receptor 3 (354 aa).

The Extracellular portion of the chain corresponds to 1 to 31 (MNECHYDKRMDFFYNRSNTDTADEWTGTKLV). Residue N15 is glycosylated (N-linked (GlcNAc...) asparagine). A helical transmembrane segment spans residues 32 to 52 (IVLCVGTFFCLFIFFSNSLVI). At 53-67 (AAVITNRKFHFPFYY) the chain is on the cytoplasmic side. Residues 68–88 (LLANLAAADFFAGIAYVFLMF) traverse the membrane as a helical segment. Over 89–101 (NTGPVSKTLTVNR) the chain is Extracellular. A helical transmembrane segment spans residues 102 to 124 (WFLRQGLLDTSLTASLANLLVIA). Residues 125–146 (VERHMSIMRMRVHSNLTKKRVT) lie on the Cytoplasmic side of the membrane. The chain crosses the membrane as a helical span at residues 147–167 (LLILLVWAIAIFMGAVPTLGW). At 168–186 (NCLCNISACSSLAPIYSRS) the chain is on the extracellular side. N172 carries an N-linked (GlcNAc...) asparagine glycan. The helical transmembrane segment at 187 to 207 (YLIFWTVSNLLAFFIMVAVYV) threads the bilayer. Residues 208–240 (RIYMYVKRKTNVLSPHTSGSISRRRAPMKLMKT) are Cytoplasmic-facing. A helical transmembrane segment spans residues 241–261 (VMTVLGAFVVCWTPGLVVLLL). Residues 262-276 (DGLNCKQCNVQHVKR) are Extracellular-facing. Residues 277-295 (WFLLLALLNSVMNPIIYSY) form a helical membrane-spanning segment. Residues 296–354 (KDEDMYNTMRKMICCALQDSNTERRPSRNPSTIHSRSETGSQYLEDSISQGPVCNKNGS) are Cytoplasmic-facing. The S-palmitoyl cysteine moiety is linked to residue C309. Residues 315-354 (SNTERRPSRNPSTIHSRSETGSQYLEDSISQGPVCNKNGS) form a disordered region. Polar residues predominate over residues 323 to 354 (RNPSTIHSRSETGSQYLEDSISQGPVCNKNGS).

Belongs to the G-protein coupled receptor 1 family. In terms of tissue distribution, most abundantly expressed in testes, kidney, and lung, with moderate levels in small intestine, and low levels in heart, stomach, spleen, and adult and perinatal brain. Little or no expression in embryonic brain, liver, or thymus.

It localises to the cell membrane. Functionally, receptor for lysophosphatidic acid (LPA), a mediator of diverse cellular activities. Seems to be coupled to the G(i)/G(o) and G(q) families of heteromeric G proteins. The chain is Lysophosphatidic acid receptor 3 (Lpar3) from Mus musculus (Mouse).